The primary structure comprises 147 residues: Hemoglobin subunit beta-1 (147 aa).

A Globin domain is found at 3–147 (EWTDKERSII…VVSALGKQYH (145 aa)). His-64 and His-93 together coordinate heme b.

It belongs to the globin family. Heterotetramer of two alpha chains and two beta chains. As to expression, red blood cells.

Functionally, involved in oxygen transport from gills to the various peripheral tissues. The sequence is that of Hemoglobin subunit beta-1 (hbb1) from Pagothenia borchgrevinki (Bald rockcod).